A 448-amino-acid polypeptide reads, in one-letter code: Potassium/proton antiporter CemA (448 aa).

The next 4 membrane-spanning stretches (helical) occupy residues 47–67 (IVFY…LSLL), 213–233 (LSSL…STLF), 314–334 (IISH…LFVA), and 395–415 (IISC…KYLI).

Belongs to the CemA family.

It is found in the plastid membrane. It carries out the reaction K(+)(in) + H(+)(out) = K(+)(out) + H(+)(in). In terms of biological role, may be involved in proton extrusion. The sequence is that of Potassium/proton antiporter CemA from Aneura mirabilis (Parasitic liverwort).